The following is a 337-amino-acid chain: Glyceraldehyde-3-phosphate dehydrogenase (337 aa).

NAD(+) is bound by residues 12–13 (RI), aspartate 34, and lysine 79. D-glyceraldehyde 3-phosphate contacts are provided by residues 150 to 152 (SCT), threonine 181, 210 to 211 (TG), and arginine 233. Residue cysteine 151 is the Nucleophile of the active site. Asparagine 315 lines the NAD(+) pocket.

The protein belongs to the glyceraldehyde-3-phosphate dehydrogenase family. As to quaternary structure, homotetramer.

It is found in the cytoplasm. The catalysed reaction is D-glyceraldehyde 3-phosphate + phosphate + NAD(+) = (2R)-3-phospho-glyceroyl phosphate + NADH + H(+). It participates in carbohydrate degradation; glycolysis; pyruvate from D-glyceraldehyde 3-phosphate: step 1/5. The sequence is that of Glyceraldehyde-3-phosphate dehydrogenase (GPD) from Phanerodontia chrysosporium (White-rot fungus).